The primary structure comprises 354 residues: Photosystem II D2 protein (354 aa).

Thr2 carries the post-translational modification N-acetylthreonine. Thr2 is subject to Phosphothreonine. Residues 42 to 62 (CAYFALGGFFTGNTFVTSWYT) form a helical membrane-spanning segment. A chlorophyll a-binding site is contributed by His119. The helical transmembrane segment at 126–142 (GFMLRQFEIARAVKIRP) threads the bilayer. Pheophytin a-binding residues include Gln131 and Asn144. A helical membrane pass occupies residues 154–167 (VFVSVFLIYPLGQQ). His199 is a binding site for chlorophyll a. A helical membrane pass occupies residues 209–229 (AALLCAIHGATVENTLFEDGD). A plastoquinone is bound by residues His216 and Phe263. A Fe cation-binding site is contributed by His216. His270 contacts Fe cation. The helical transmembrane segment at 280-296 (GLWMSAIGVVGLALNLR) threads the bilayer.

It belongs to the reaction center PufL/M/PsbA/D family. PSII is composed of 1 copy each of membrane proteins PsbA, PsbB, PsbC, PsbD, PsbE, PsbF, PsbH, PsbI, PsbJ, PsbK, PsbL, PsbM, PsbT, PsbX, PsbY, PsbZ, Psb30/Ycf12, at least 3 peripheral proteins of the oxygen-evolving complex and a large number of cofactors. It forms dimeric complexes. It depends on The D1/D2 heterodimer binds P680, chlorophylls that are the primary electron donor of PSII, and subsequent electron acceptors. It shares a non-heme iron and each subunit binds pheophytin, quinone, additional chlorophylls, carotenoids and lipids. There is also a Cl(-1) ion associated with D1 and D2, which is required for oxygen evolution. The PSII complex binds additional chlorophylls, carotenoids and specific lipids. as a cofactor.

It is found in the plastid. Its subcellular location is the chloroplast thylakoid membrane. It catalyses the reaction 2 a plastoquinone + 4 hnu + 2 H2O = 2 a plastoquinol + O2. Functionally, photosystem II (PSII) is a light-driven water:plastoquinone oxidoreductase that uses light energy to abstract electrons from H(2)O, generating O(2) and a proton gradient subsequently used for ATP formation. It consists of a core antenna complex that captures photons, and an electron transfer chain that converts photonic excitation into a charge separation. The D1/D2 (PsbA/PsbD) reaction center heterodimer binds P680, the primary electron donor of PSII as well as several subsequent electron acceptors. D2 is needed for assembly of a stable PSII complex. This chain is Photosystem II D2 protein, found in Mesostigma viride (Green alga).